Reading from the N-terminus, the 119-residue chain is Large ribosomal subunit protein uL24 (119 aa).

Belongs to the universal ribosomal protein uL24 family. Part of the 50S ribosomal subunit.

Its function is as follows. One of two assembly initiator proteins, it binds directly to the 5'-end of the 23S rRNA, where it nucleates assembly of the 50S subunit. Functionally, one of the proteins that surrounds the polypeptide exit tunnel on the outside of the subunit. The protein is Large ribosomal subunit protein uL24 of Arthrobacter sp. (strain FB24).